The sequence spans 281 residues: Bifunctional protein FolD (281 aa).

NADP(+) is bound by residues 164-166 (GRS), S189, and I230.

The protein belongs to the tetrahydrofolate dehydrogenase/cyclohydrolase family. As to quaternary structure, homodimer.

The enzyme catalyses (6R)-5,10-methylene-5,6,7,8-tetrahydrofolate + NADP(+) = (6R)-5,10-methenyltetrahydrofolate + NADPH. The catalysed reaction is (6R)-5,10-methenyltetrahydrofolate + H2O = (6R)-10-formyltetrahydrofolate + H(+). It functions in the pathway one-carbon metabolism; tetrahydrofolate interconversion. In terms of biological role, catalyzes the oxidation of 5,10-methylenetetrahydrofolate to 5,10-methenyltetrahydrofolate and then the hydrolysis of 5,10-methenyltetrahydrofolate to 10-formyltetrahydrofolate. The polypeptide is Bifunctional protein FolD (Pelagibacter ubique (strain HTCC1062)).